Reading from the N-terminus, the 4243-residue chain is Fibrocystin-L (4243 aa).

An N-terminal signal peptide occupies residues 1–20 (MGHLWLLGIWGLCGLLLCAA). Topologically, residues 21-4210 (DPSTDGSQII…KASTVGTYAQ (4190 aa)) are extracellular. IPT/TIG domains follow at residues 31 to 129 (PKVT…TCKG), 146 to 255 (PTIR…KMAY), and 270 to 361 (AEVT…ILEY). An O-linked (GalNAc...) threonine glycan is attached at T122. Residues 337 to 492 (PGGRGLKLEV…NVYTEQQTGD (156 aa)) enclose the PA14 domain. T445 carries an O-linked (GalNAc...) threonine glycan. IPT/TIG domains lie at 1067-1151 (PLVL…EFYF), 1155-1234 (SQIS…AFSY), 1240-1322 (PIIT…RDKL), 1330-1469 (LEVT…SFSY), 1566-1649 (PSIS…TLSN), 1659-1743 (PNID…TFSY), 1749-1828 (PYIT…NLTV), 1831-1910 (PPVA…LFTY), 1916-1997 (PFLR…VFEY), 1999-2085 (LNIQ…PFTY), and 2091-2176 (PLIT…DFLY). O-linked (GalNAc...) threonine glycans are attached at residues T1803 and T1839. The region spanning 2184-2304 (FSWGGKSPPE…VPVTWTRLAH (121 aa)) is the G8 1 domain. Residue T2320 is glycosylated (O-linked (GalNAc...) threonine). PbH1 repeat units lie at residues 2508–2530 (THHLLVERNIIYDIKGGAFFIED), 2566–2588 (NPNNTIRHNAVAGGTHFGFWYRM), 2665–2687 (GGALQFHNFVMVNNYEAGIETKR), and 2733–2756 (SEGLTVSSVHFMNFDRPNCVALGV). In terms of domain architecture, G8 2 spans 3036–3174 (SFWQSSRENN…HSIYKTKLSE (139 aa)). PbH1 repeat units follow at residues 3293–3315 (KGNARISNVEFYHSGQEGFRDST), 3355–3377 (TDGLDIDDNIIHFTVGEGIRIWG), 3416–3438 (GTNTVLQNNVVAGFGRAGYRIDG), 3471–3493 (PGCSLIQGFTIWTCWDYGIYFQT), and 3527–3548 (SKNVQIKSSLIVGSSPGFNCSD). O-linked (GalNAc...) threonine glycosylation is present at T3736. The chain crosses the membrane as a helical span at residues 4211 to 4231 (IMTVVISCLVGRMWLLEIFMA). Topologically, residues 4232 to 4243 (AVSTLNITLRSY) are cytoplasmic.

It is found in the membrane. It localises to the cell projection. The protein localises to the stereocilium membrane. In terms of biological role, component of hair-cell stereocilia coat. Required for normal hearing. This Homo sapiens (Human) protein is Fibrocystin-L (PKHD1L1).